The sequence spans 147 residues: Large ribosomal subunit protein uL15 (147 aa).

The disordered stretch occupies residues 1–45; it reads MTIKLHHLRPAPGAKSDKIRVGRGEGGKRGKTAGRGTKGTKARKN. Residues 15-28 are compositionally biased toward basic and acidic residues; sequence KSDKIRVGRGEGGK.

This sequence belongs to the universal ribosomal protein uL15 family. In terms of assembly, part of the 50S ribosomal subunit.

In terms of biological role, binds to the 23S rRNA. The chain is Large ribosomal subunit protein uL15 from Rhodococcus jostii (strain RHA1).